The following is a 60-amino-acid chain: Snake venom metalloproteinase bothrojaractivase (60 aa).

A Peptidase M12B domain is found at 1–60 (RYIELAVVADHGMFTKYRVHELVNTVNGFFRSKQDLIKVQKDKTLTSFGEWRERDLLPRI). Glu4 is a Ca(2+) binding site.

The protein belongs to the venom metalloproteinase (M12B) family. P-I subfamily. As to quaternary structure, monomer. The cofactor is Zn(2+). Expressed by the venom gland.

It is found in the secreted. With respect to regulation, completely inhibited by EDTA and EGTA. Partially inhibited by serine proteinase inhibitors PMSF and benzamidine. Not inhibited by cysteine proteinase inhibitors mercury ions and E-64. Is active without cofactors, although the presence of low concentrations of calcium and zinc ions enhanced its ability to convert prothrombin (F2) into active thrombin. Its function is as follows. Prothrombin (F2) activator that is cofactor-independent. Also has fibrinolytic and fibrinogenolytic activity. It degrades the Aalpha-chain and more slowly the Bbeta-chain of fibrin and fibrinogen, while the gamma-chain is only partially and slowly affected. A dose-dependent procoagulant activity is shown in human plasma. The chain is Snake venom metalloproteinase bothrojaractivase from Bothrops jararaca (Jararaca).